The chain runs to 192 residues: Ribosomal RNA small subunit methyltransferase G (192 aa).

Residues Gly63, Phe68, 112–113 (IE), and Arg125 contribute to the S-adenosyl-L-methionine site.

This sequence belongs to the methyltransferase superfamily. RNA methyltransferase RsmG family.

The protein resides in the cytoplasm. It carries out the reaction guanosine(527) in 16S rRNA + S-adenosyl-L-methionine = N(7)-methylguanosine(527) in 16S rRNA + S-adenosyl-L-homocysteine. In terms of biological role, specifically methylates the N7 position of guanine in position 527 of 16S rRNA. The chain is Ribosomal RNA small subunit methyltransferase G from Rickettsia felis (strain ATCC VR-1525 / URRWXCal2) (Rickettsia azadi).